Reading from the N-terminus, the 448-residue chain is Probable glycine dehydrogenase (decarboxylating) subunit 1 (448 aa).

The protein belongs to the GcvP family. N-terminal subunit subfamily. In terms of assembly, the glycine cleavage system is composed of four proteins: P, T, L and H. In this organism, the P 'protein' is a heterodimer of two subunits.

It catalyses the reaction N(6)-[(R)-lipoyl]-L-lysyl-[glycine-cleavage complex H protein] + glycine + H(+) = N(6)-[(R)-S(8)-aminomethyldihydrolipoyl]-L-lysyl-[glycine-cleavage complex H protein] + CO2. Functionally, the glycine cleavage system catalyzes the degradation of glycine. The P protein binds the alpha-amino group of glycine through its pyridoxal phosphate cofactor; CO(2) is released and the remaining methylamine moiety is then transferred to the lipoamide cofactor of the H protein. The sequence is that of Probable glycine dehydrogenase (decarboxylating) subunit 1 from Staphylococcus carnosus (strain TM300).